Here is an 82-residue protein sequence, read N- to C-terminus: UPF0248 protein Mevan_1298 (82 aa).

This sequence belongs to the UPF0248 family.

In Methanococcus vannielii (strain ATCC 35089 / DSM 1224 / JCM 13029 / OCM 148 / SB), this protein is UPF0248 protein Mevan_1298.